We begin with the raw amino-acid sequence, 280 residues long: B3 domain-containing protein At5g25470 (280 aa).

Residues 20-114 (WKSLSPGQNW…FLEVQIFKND (95 aa)) constitute a DNA-binding region (TF-B3 1). The tract at residues 122–153 (PPEVEPETEPFHPTTPKNSHKETTTASASASA) is disordered. Residues 183–276 (YFVKTLTKGN…ELVTAVRVHF (94 aa)) constitute a DNA-binding region (TF-B3 2).

The protein localises to the nucleus. The chain is B3 domain-containing protein At5g25470 from Arabidopsis thaliana (Mouse-ear cress).